Consider the following 256-residue polypeptide: Phosphatidylglycerol--prolipoprotein diacylglyceryl transferase (256 aa).

Transmembrane regions (helical) follow at residues 19-39 (VHWYGLMYLIGFVGAWLLGYW), 56-76 (LIFYSALGVILGGRVGYMLFY), and 91-111 (IWEGGMSFHGGLLGVVIAAWL). R139 provides a ligand contact to a 1,2-diacyl-sn-glycero-3-phospho-(1'-sn-glycerol). A helical transmembrane segment spans residues 231-251 (FGWLTMGQVLSIPMLLIGIWL).

This sequence belongs to the Lgt family.

It is found in the cell inner membrane. The enzyme catalyses L-cysteinyl-[prolipoprotein] + a 1,2-diacyl-sn-glycero-3-phospho-(1'-sn-glycerol) = an S-1,2-diacyl-sn-glyceryl-L-cysteinyl-[prolipoprotein] + sn-glycerol 1-phosphate + H(+). Its pathway is protein modification; lipoprotein biosynthesis (diacylglyceryl transfer). Its function is as follows. Catalyzes the transfer of the diacylglyceryl group from phosphatidylglycerol to the sulfhydryl group of the N-terminal cysteine of a prolipoprotein, the first step in the formation of mature lipoproteins. This Legionella pneumophila subsp. pneumophila (strain Philadelphia 1 / ATCC 33152 / DSM 7513) protein is Phosphatidylglycerol--prolipoprotein diacylglyceryl transferase.